The primary structure comprises 269 residues: Bifunctional protein FolD (269 aa).

Residues 149-151 and Val215 each bind NADP(+); that span reads GLG.

It belongs to the tetrahydrofolate dehydrogenase/cyclohydrolase family. As to quaternary structure, homodimer.

It carries out the reaction (6R)-5,10-methylene-5,6,7,8-tetrahydrofolate + NADP(+) = (6R)-5,10-methenyltetrahydrofolate + NADPH. It catalyses the reaction (6R)-5,10-methenyltetrahydrofolate + H2O = (6R)-10-formyltetrahydrofolate + H(+). It participates in one-carbon metabolism; tetrahydrofolate interconversion. Its function is as follows. Catalyzes the oxidation of 5,10-methylenetetrahydrofolate to 5,10-methenyltetrahydrofolate and then the hydrolysis of 5,10-methenyltetrahydrofolate to 10-formyltetrahydrofolate. The protein is Bifunctional protein FolD of Mycoplasma pneumoniae (strain ATCC 29342 / M129 / Subtype 1) (Mycoplasmoides pneumoniae).